The primary structure comprises 77 residues: Large ribosomal subunit protein eL20 (77 aa).

This sequence belongs to the eukaryotic ribosomal protein eL20 family. In terms of assembly, part of the 50S ribosomal subunit. Binds 23S rRNA.

In Thermococcus gammatolerans (strain DSM 15229 / JCM 11827 / EJ3), this protein is Large ribosomal subunit protein eL20.